Here is a 221-residue protein sequence, read N- to C-terminus: Protein lethal(2)k10201 (221 aa).

C2H2-type zinc fingers lie at residues 74–97 (YSCVECRKMLPTAHLLDLHITEQH) and 113–138 (FSCFLEECTIKFHTARQRKDHCIITH). Residues 146–168 (FDHSKNRGKQKHQGKSKPNSMEV) are disordered. Residues 151 to 160 (NRGKQKHQGK) are compositionally biased toward basic residues.

Functionally, vital for development. The protein is Protein lethal(2)k10201 (l(2)k10201) of Drosophila melanogaster (Fruit fly).